Reading from the N-terminus, the 175-residue chain is SKP1-like protein 20 (175 aa).

An interaction with the F-box domain of F-box proteins region spans residues 117-175 (ILAANYLNIKGLLDLTCQTVADMIKGKTPEEIRKTFNIKNDFTPEEEEEVRRENQWAFE).

This sequence belongs to the SKP1 family. As to quaternary structure, part of a SCF (SKP1-CUL1-F-box protein) E3 ubiquitin-protein ligase complex. Interacts with rice black streaked dwarf virus RBSDV protein P7-2. Is able to form the SCF complex together with CUL1 and the viral P7-2 protein. Interacts with D3.

The protein resides in the nucleus. It participates in protein modification; protein ubiquitination. Functionally, involved in ubiquitination and subsequent proteasomal degradation of target proteins. Together with CUL1, a RING-box and a F-box protein, it forms a SCF E3 ubiquitin ligase complex. The functional specificity of this complex depends on the type of F-box protein. In the SCF complex, it serves as an adapter that links the F-box protein to CUL1. The sequence is that of SKP1-like protein 20 from Oryza sativa subsp. japonica (Rice).